A 240-amino-acid chain; its full sequence is 6-phosphogluconolactonase (240 aa).

It belongs to the glucosamine/galactosamine-6-phosphate isomerase family. 6-phosphogluconolactonase subfamily.

The enzyme catalyses 6-phospho-D-glucono-1,5-lactone + H2O = 6-phospho-D-gluconate + H(+). It participates in carbohydrate degradation; pentose phosphate pathway; D-ribulose 5-phosphate from D-glucose 6-phosphate (oxidative stage): step 2/3. Its function is as follows. Hydrolysis of 6-phosphogluconolactone to 6-phosphogluconate. This is 6-phosphogluconolactonase (pgl) from Nostoc sp. (strain PCC 7120 / SAG 25.82 / UTEX 2576).